Reading from the N-terminus, the 166-residue chain is Crossover junction endodeoxyribonuclease RuvC (166 aa).

Active-site residues include aspartate 12, glutamate 71, and aspartate 143. Residues aspartate 12, glutamate 71, and aspartate 143 each contribute to the Mg(2+) site.

Belongs to the RuvC family. In terms of assembly, homodimer which binds Holliday junction (HJ) DNA. The HJ becomes 2-fold symmetrical on binding to RuvC with unstacked arms; it has a different conformation from HJ DNA in complex with RuvA. In the full resolvosome a probable DNA-RuvA(4)-RuvB(12)-RuvC(2) complex forms which resolves the HJ. Mg(2+) serves as cofactor.

It is found in the cytoplasm. The catalysed reaction is Endonucleolytic cleavage at a junction such as a reciprocal single-stranded crossover between two homologous DNA duplexes (Holliday junction).. The RuvA-RuvB-RuvC complex processes Holliday junction (HJ) DNA during genetic recombination and DNA repair. Endonuclease that resolves HJ intermediates. Cleaves cruciform DNA by making single-stranded nicks across the HJ at symmetrical positions within the homologous arms, yielding a 5'-phosphate and a 3'-hydroxyl group; requires a central core of homology in the junction. The consensus cleavage sequence is 5'-(A/T)TT(C/G)-3'. Cleavage occurs on the 3'-side of the TT dinucleotide at the point of strand exchange. HJ branch migration catalyzed by RuvA-RuvB allows RuvC to scan DNA until it finds its consensus sequence, where it cleaves and resolves the cruciform DNA. This chain is Crossover junction endodeoxyribonuclease RuvC, found in Oleidesulfovibrio alaskensis (strain ATCC BAA-1058 / DSM 17464 / G20) (Desulfovibrio alaskensis).